Consider the following 155-residue polypeptide: Ribosome maturation factor RimP (155 aa).

The protein belongs to the RimP family.

Its subcellular location is the cytoplasm. Functionally, required for maturation of 30S ribosomal subunits. The chain is Ribosome maturation factor RimP from Bacteroides thetaiotaomicron (strain ATCC 29148 / DSM 2079 / JCM 5827 / CCUG 10774 / NCTC 10582 / VPI-5482 / E50).